The sequence spans 450 residues: C4-dicarboxylate transport protein (450 aa).

The next 8 helical transmembrane spans lie at 25-45 (VVFAIIIGVLLGHFQPEYGAA), 56-76 (LIKMIIAPVIFLTIVTGIASM), 90-110 (MAYFLTFSTLALVVGLVVANV), 162-182 (ILQVLLVAVLFGVSLAMVGDA), 200-220 (LVNIVMKAAPIGAFGAMAFTI), 234-254 (LVLTFYITSAVFVLVVLGAVA), 319-339 (IYMTLAALFIAQATDTHLTLG), and 367-387 (AATLAVVPEVPVAGMALILGV).

It belongs to the dicarboxylate/amino acid:cation symporter (DAACS) (TC 2.A.23) family.

The protein resides in the cell inner membrane. Functionally, responsible for the transport of dicarboxylates such as succinate, fumarate, and malate from the periplasm across the membrane. This chain is C4-dicarboxylate transport protein, found in Acidovorax sp. (strain JS42).